The following is a 314-amino-acid chain: Dihydroorotate dehydrogenase (fumarate) (314 aa).

Substrate is bound by residues K46, N70–L74, and N130. Position 46 to 47 (K46 to S47) interacts with FMN. Position 130 (N130) interacts with FMN. Active-site nucleophile residues include S132 and C133. Residues K167 and I195 each coordinate FMN. Substrate is bound at residue N196–S197. FMN is bound by residues G224, G252–G253, and G274–T275.

It belongs to the dihydroorotate dehydrogenase family. Type 1 subfamily. Homodimer. FMN is required as a cofactor.

The protein localises to the cytoplasm. It carries out the reaction (S)-dihydroorotate + fumarate = orotate + succinate. The protein operates within pyrimidine metabolism; UMP biosynthesis via de novo pathway. With respect to regulation, the activity is independent of the presence of oxygen. Its function is as follows. Catalyzes the conversion of dihydroorotate to orotate with fumarate as the electron acceptor. The sequence is that of Dihydroorotate dehydrogenase (fumarate) (URA1) from Lachancea kluyveri (strain ATCC 58438 / CBS 3082 / BCRC 21498 / NBRC 1685 / JCM 7257 / NCYC 543 / NRRL Y-12651) (Yeast).